A 65-amino-acid chain; its full sequence is Small ribosomal subunit protein eS27 (65 aa).

The Zn(2+) site is built by cysteine 20, cysteine 23, cysteine 39, and cysteine 42. The segment at 20-42 (CIDCGNEQIVFSHPATKVRCLVC) adopts a C4-type zinc-finger fold.

This sequence belongs to the eukaryotic ribosomal protein eS27 family. As to quaternary structure, part of the 30S ribosomal subunit. Requires Zn(2+) as cofactor.

This chain is Small ribosomal subunit protein eS27, found in Thermococcus gammatolerans (strain DSM 15229 / JCM 11827 / EJ3).